Reading from the N-terminus, the 290-residue chain is uncharacterized protein (290 aa).

Residues 153–178 (EMVPITTSSTTPRSKGDEATSTGAFP) form a disordered region. Residues 157–178 (ITTSSTTPRSKGDEATSTGAFP) are compositionally biased toward polar residues. A helical membrane pass occupies residues 202-222 (LIAVTLLLGGAAIIVFVIFEV). The interval 246 to 276 (KEEDQKPGTTESQLDSQPEKVKHNVPNSSDS) is disordered. Polar residues predominate over residues 252–261 (PGTTESQLDS).

It localises to the membrane. This is an uncharacterized protein from Mus musculus (Mouse).